Reading from the N-terminus, the 278-residue chain is Indole-3-glycerol phosphate synthase (278 aa).

This sequence belongs to the TrpC family.

The enzyme catalyses 1-(2-carboxyphenylamino)-1-deoxy-D-ribulose 5-phosphate + H(+) = (1S,2R)-1-C-(indol-3-yl)glycerol 3-phosphate + CO2 + H2O. Its pathway is amino-acid biosynthesis; L-tryptophan biosynthesis; L-tryptophan from chorismate: step 4/5. The chain is Indole-3-glycerol phosphate synthase from Stutzerimonas stutzeri (strain A1501) (Pseudomonas stutzeri).